The chain runs to 96 residues: MSSISLNVLDDSVLIKPISEEKQGGIVLPSSAEKKPTKGEVIAIGEGSRNSSGERVTLTVKAGDKVFYRQWAGTEIEHNNEKLIVMKESDILAVIK.

Belongs to the GroES chaperonin family. Heptamer of 7 subunits arranged in a ring. Interacts with the chaperonin GroEL.

The protein resides in the cytoplasm. In terms of biological role, together with the chaperonin GroEL, plays an essential role in assisting protein folding. The GroEL-GroES system forms a nano-cage that allows encapsulation of the non-native substrate proteins and provides a physical environment optimized to promote and accelerate protein folding. GroES binds to the apical surface of the GroEL ring, thereby capping the opening of the GroEL channel. In Wolbachia pipientis wMel, this protein is Co-chaperonin GroES.